We begin with the raw amino-acid sequence, 514 residues long: 2,3-bisphosphoglycerate-independent phosphoglycerate mutase (514 aa).

Mn(2+)-binding residues include aspartate 14 and serine 64. Serine 64 functions as the Phosphoserine intermediate in the catalytic mechanism. Residues histidine 125, 155–156 (RD), arginine 187, arginine 193, 263–266 (RADR), and lysine 337 contribute to the substrate site. Aspartate 404, histidine 408, aspartate 445, histidine 446, and histidine 463 together coordinate Mn(2+).

It belongs to the BPG-independent phosphoglycerate mutase family. As to quaternary structure, monomer. Requires Mn(2+) as cofactor.

The catalysed reaction is (2R)-2-phosphoglycerate = (2R)-3-phosphoglycerate. Its pathway is carbohydrate degradation; glycolysis; pyruvate from D-glyceraldehyde 3-phosphate: step 3/5. Catalyzes the interconversion of 2-phosphoglycerate and 3-phosphoglycerate. This is 2,3-bisphosphoglycerate-independent phosphoglycerate mutase from Hahella chejuensis (strain KCTC 2396).